The sequence spans 196 residues: Putative manganese efflux pump MntP (196 aa).

6 consecutive transmembrane segments (helical) span residues 3-23, 39-59, 67-87, 109-129, 137-157, and 172-192; these read PASL…ASIG, IGAV…ALGH, GVDH…MIWA, IWLI…VGIT, IIAA…LGTL, and ILGG…HLAG.

Belongs to the MntP (TC 9.B.29) family.

It is found in the cell inner membrane. In terms of biological role, probably functions as a manganese efflux pump. This chain is Putative manganese efflux pump MntP, found in Chromohalobacter salexigens (strain ATCC BAA-138 / DSM 3043 / CIP 106854 / NCIMB 13768 / 1H11).